Here is a 375-residue protein sequence, read N- to C-terminus: Queuine tRNA-ribosyltransferase (375 aa).

Asp89 (proton acceptor) is an active-site residue. Substrate-binding positions include 89 to 93 (DSGGF), Asp143, Gln185, and Gly212. Residues 243 to 249 (GVGKPED) are RNA binding. Asp262 (nucleophile) is an active-site residue. The segment at 267–271 (TRNAR) is RNA binding; important for wobble base 34 recognition. Residues Cys300, Cys302, Cys305, and His331 each coordinate Zn(2+).

Belongs to the queuine tRNA-ribosyltransferase family. As to quaternary structure, homodimer. Within each dimer, one monomer is responsible for RNA recognition and catalysis, while the other monomer binds to the replacement base PreQ1. It depends on Zn(2+) as a cofactor.

It catalyses the reaction 7-aminomethyl-7-carbaguanine + guanosine(34) in tRNA = 7-aminomethyl-7-carbaguanosine(34) in tRNA + guanine. It participates in tRNA modification; tRNA-queuosine biosynthesis. Catalyzes the base-exchange of a guanine (G) residue with the queuine precursor 7-aminomethyl-7-deazaguanine (PreQ1) at position 34 (anticodon wobble position) in tRNAs with GU(N) anticodons (tRNA-Asp, -Asn, -His and -Tyr). Catalysis occurs through a double-displacement mechanism. The nucleophile active site attacks the C1' of nucleotide 34 to detach the guanine base from the RNA, forming a covalent enzyme-RNA intermediate. The proton acceptor active site deprotonates the incoming PreQ1, allowing a nucleophilic attack on the C1' of the ribose to form the product. After dissociation, two additional enzymatic reactions on the tRNA convert PreQ1 to queuine (Q), resulting in the hypermodified nucleoside queuosine (7-(((4,5-cis-dihydroxy-2-cyclopenten-1-yl)amino)methyl)-7-deazaguanosine). The polypeptide is Queuine tRNA-ribosyltransferase (Pseudoalteromonas translucida (strain TAC 125)).